Consider the following 152-residue polypeptide: Small ribosomal subunit protein uS19x (152 aa).

It belongs to the universal ribosomal protein uS19 family.

It is found in the cytoplasm. The protein is Small ribosomal subunit protein uS19x (RPS15D) of Arabidopsis thaliana (Mouse-ear cress).